A 66-amino-acid polypeptide reads, in one-letter code: Small ribosomal subunit protein bS21 (66 aa).

Belongs to the bacterial ribosomal protein bS21 family.

This is Small ribosomal subunit protein bS21 from Rickettsia felis (strain ATCC VR-1525 / URRWXCal2) (Rickettsia azadi).